Consider the following 729-residue polypeptide: Transketolase (729 aa).

Position 97 (H97) interacts with substrate. Thiamine diphosphate-binding positions include H138 and 186–188 (GPL). D227 serves as a coordination point for Mg(2+). Thiamine diphosphate contacts are provided by G228 and N257. Positions 257 and 259 each coordinate Mg(2+). 3 residues coordinate substrate: H332, R423, and S450. H332 serves as a coordination point for thiamine diphosphate. The active-site Proton donor is E477. F503 serves as a coordination point for thiamine diphosphate. Substrate is bound by residues H527, D535, and R586.

This sequence belongs to the transketolase family. In terms of assembly, homodimer. Mg(2+) is required as a cofactor. Ca(2+) serves as cofactor. Requires Mn(2+) as cofactor. The cofactor is Co(2+). It depends on thiamine diphosphate as a cofactor.

The catalysed reaction is D-sedoheptulose 7-phosphate + D-glyceraldehyde 3-phosphate = aldehydo-D-ribose 5-phosphate + D-xylulose 5-phosphate. Its function is as follows. Catalyzes the transfer of a two-carbon ketol group from a ketose donor to an aldose acceptor, via a covalent intermediate with the cofactor thiamine pyrophosphate. The polypeptide is Transketolase (tkt) (Streptococcus pyogenes serotype M18 (strain MGAS8232)).